An 827-amino-acid polypeptide reads, in one-letter code: Xanthomonalisin (827 aa).

The signal sequence occupies residues 1 to 23; that stretch reads MKIEKTALTVAIALAMSSLSAHA. Positions 24–237 are cleaved as a propeptide — removed in mature form; it reads EDAWVSTHTQ…GPNVGTQAAA (214 aa). Residues 241-625 form the Peptidase S53 domain; sequence AHHPQDFAAI…GKLNTYAQAN (385 aa). Active-site charge relay system residues include Glu312, Asp316, and Ser544. Residues Asp585, Val586, Ala601, Gly603, and Asp605 each contribute to the Ca(2+) site. One can recognise a PKD domain in the interval 635 to 722; that stretch reads TNAPPVANFS…VTVSSSGGTG (88 aa). The propeptide at 636 to 827 is removed in mature form; the sequence is NAPPVANFSV…GVSLKATWTN (192 aa).

Ca(2+) serves as cofactor. In terms of processing, autocatalytically processed.

Its subcellular location is the secreted. It catalyses the reaction Cleavage of casein.. With respect to regulation, inhibited by 1,2-epoxy-3-(p-nitrophenoxy)propane (EPNP), but not by pepstatin, pepstatin Ac (S-PI) and diazoacetyl-DL-norleucine methyl ester (DAN). Not inhibited by metal ions. Its function is as follows. Pepstatin-insensitive serine-carboxyl proteinase. Shows activity on acid-denatured hemoglobin and on casein. The chain is Xanthomonalisin from Xanthomonas sp. (strain T-22).